We begin with the raw amino-acid sequence, 152 residues long: Small ribosomal subunit protein uS13 (152 aa).

Belongs to the universal ribosomal protein uS13 family.

It is found in the cytoplasm. Located at the top of the head of the 40S subunit, it contacts several helices of the 18S rRNA. The chain is Small ribosomal subunit protein uS13 (RPS18) from Argopecten irradians (Bay scallop).